Consider the following 205-residue polypeptide: D-alanine--D-alanine ligase (205 aa).

The ATP-grasp domain occupies 111-205; sequence KHVLKSLGID…LGRAIGTMEF (95 aa). An ATP-binding site is contributed by 139–190; the sequence is MPYPFVIKPICGGSTIGVHAIFSRSEYLDLSVHADALEGRMLVEEYIPGQEV.

The protein belongs to the D-alanine--D-alanine ligase family. Mg(2+) is required as a cofactor. The cofactor is Mn(2+).

It is found in the cytoplasm. The enzyme catalyses 2 D-alanine + ATP = D-alanyl-D-alanine + ADP + phosphate + H(+). It participates in cell wall biogenesis; peptidoglycan biosynthesis. Functionally, cell wall formation. The chain is D-alanine--D-alanine ligase (ddl) from Anaplasma centrale.